The chain runs to 707 residues: Polyribonucleotide nucleotidyltransferase (707 aa).

The Mg(2+) site is built by Asp-486 and Asp-492. In terms of domain architecture, KH spans 553 to 612 (PRIHTIKINPEKIKDVIGKGGSVIRALTEETGTTIEIEDDGTVKIAATDGDKAKHAIRRI). One can recognise an S1 motif domain in the interval 622–690 (GRIYQGKVTR…RQGRVRLSIK (69 aa)).

It belongs to the polyribonucleotide nucleotidyltransferase family. In terms of assembly, component of the RNA degradosome, which is a multiprotein complex involved in RNA processing and mRNA degradation. The cofactor is Mg(2+).

The protein resides in the cytoplasm. It carries out the reaction RNA(n+1) + phosphate = RNA(n) + a ribonucleoside 5'-diphosphate. Involved in mRNA degradation. Catalyzes the phosphorolysis of single-stranded polyribonucleotides processively in the 3'- to 5'-direction. The protein is Polyribonucleotide nucleotidyltransferase of Edwardsiella ictaluri (strain 93-146).